A 488-amino-acid polypeptide reads, in one-letter code: Pre-glycoprotein polyprotein GP complex (488 aa).

Gly2 carries the N-myristoyl glycine; by host lipid modification. Topologically, residues 2–17 (GQLFSFFEEVPNIIHE) are extracellular. The helical transmembrane segment at 18–32 (AINIALIAVSLIAAL) threads the bilayer. A topological domain (cytoplasmic) is located at residue Lys33. The helical transmembrane segment at 34-53 (GMINLWKSGLFQLIFFLTLA) threads the bilayer. Extracellular-side segments run 54 to 58 (GRSCS) and 59 to 427 (FRIG…TLVD). Cys57 provides a ligand contact to Zn(2+). 7 N-linked (GlcNAc...) asparagine; by host glycosylation sites follow: Asn69, Asn88, Asn99, Asn125, Asn171, Asn178, and Asn222. 4 cysteine pairs are disulfide-bonded: Cys85–Cys229, Cys274–Cys287, Cys296–Cys305, and Cys359–Cys380. 4 N-linked (GlcNAc...) asparagine; by host glycosylation sites follow: Asn360, Asn368, Asn385, and Asn390. A helical membrane pass occupies residues 428–448 (ICFWSTLFFTTTLFLHLVGFP). Over 449–488 (THRHIRGEPCPLPHRLNSRGGCRCGKYPELKKPITWHKNH) the chain is Cytoplasmic. Residues His450, His452, Cys458, His462, Cys470, Cys472, and His488 each contribute to the Zn(2+) site.

Belongs to the arenaviridae GPC protein family. In terms of assembly, homotetramer; disulfide-linked. Homotetramer. GP2 homotetramers bind through ionic interactions with GP1 homotetramers to form the GP complex together with the stable signal peptide. The GP-C polyprotein interacts with the host protease MBTPS1/SKI-1 resulting in the polyprotein processing. Post-translationally, specific enzymatic cleavages in vivo yield mature proteins. GP-C polyprotein is cleaved in the endoplasmic reticulum by the host protease MBTPS1. Only cleaved glycoprotein is incorporated into virions. The SSP remains stably associated with the GP complex following cleavage by signal peptidase and plays crucial roles in the trafficking of GP through the secretory pathway. In terms of processing, myristoylation is necessary for GP2-mediated fusion activity.

Its subcellular location is the virion membrane. The protein resides in the host endoplasmic reticulum membrane. The protein localises to the host Golgi apparatus membrane. It localises to the host cell membrane. Its function is as follows. Interacts with the host receptor. Mediates virus attachment to host TFRC. This attachment induces virion internalization predominantly through clathrin-mediated endocytosis. Functionally, class I viral fusion protein that directs fusion of viral and host endosomal membranes, leading to delivery of the nucleocapsid into the cytoplasm. Membrane fusion is mediated by irreversible conformational changes induced upon acidification in the endosome. In terms of biological role, stable signal peptide (SSP): cleaved and functions as a signal peptide. In addition, it is also retained as the third component of the GP complex. The SSP is required for efficient glycoprotein expression, post-translational maturation cleavage of GP1 and GP2, glycoprotein transport to the cell surface plasma membrane, formation of infectious virus particles, and acid pH-dependent glycoprotein-mediated cell fusion. This is Pre-glycoprotein polyprotein GP complex from Homo sapiens (Human).